The chain runs to 138 residues: Basic phospholipase A2 DAV-N6 (138 aa).

Positions 1-16 (MRTLWIVAVLLVSVEG) are cleaved as a signal peptide. Intrachain disulfides connect Cys42-Cys131, Cys44-Cys60, Cys59-Cys111, Cys65-Cys138, Cys66-Cys104, Cys73-Cys97, and Cys91-Cys102. 3 residues coordinate Ca(2+): Tyr43, Gly45, and Gly47. The active site involves His63. Asp64 is a binding site for Ca(2+). Residue Asp105 is part of the active site.

Requires Ca(2+) as cofactor. In terms of tissue distribution, expressed by the venom gland.

Its subcellular location is the secreted. The catalysed reaction is a 1,2-diacyl-sn-glycero-3-phosphocholine + H2O = a 1-acyl-sn-glycero-3-phosphocholine + a fatty acid + H(+). In terms of biological role, snake venom phospholipase A2 (PLA2) that inhibits neuromuscular transmission by blocking acetylcholine release from the nerve termini. PLA2 catalyzes the calcium-dependent hydrolysis of the 2-acyl groups in 3-sn-phosphoglycerides. In Deinagkistrodon acutus (Hundred-pace snake), this protein is Basic phospholipase A2 DAV-N6.